Here is a 110-residue protein sequence, read N- to C-terminus: Parvalbumin alpha (110 aa).

2 consecutive EF-hand domains span residues 39–74 and 78–110; these read KGPD…FTPN and LSVK…VSES. 11 residues coordinate Ca(2+): Asp52, Asp54, Ser56, Phe58, Glu60, Glu63, Asp91, Asp93, Asp95, Lys97, and Glu102.

It belongs to the parvalbumin family.

Its function is as follows. In muscle, parvalbumin is thought to be involved in relaxation after contraction. It binds two calcium ions. The protein is Parvalbumin alpha of Aquarana catesbeiana (American bullfrog).